The sequence spans 454 residues: Aquaporin-7 (454 aa).

Topologically, residues 1–71 (MNINEPRDGG…LHLHNKTRNH (71 aa)) are cytoplasmic. Residues 72–92 (FVATVAEFAGTTLFLFFAFSG) traverse the membrane as a helical segment. The Extracellular portion of the chain corresponds to 93–115 (TQVALLATPANDSNVVGTPSNPA). An N-linked (GlcNAc...) asparagine glycan is attached at N103. A helical membrane pass occupies residues 116–136 (QLLYVSLCFGFSLAVNAWVFF). Residues 137 to 163 (RISGGLFNPAVTMGMCIVGALPYFRGL) lie on the Cytoplasmic side of the membrane. An NPA 1 motif is present at residues 144 to 146 (NPA). Residues 164-184 (LLIFAQIIGGIAAAAIVSALF) form a helical membrane-spanning segment. The Extracellular portion of the chain corresponds to 185-202 (PGPITFRTSLGGGTSIVQ). The chain crosses the membrane as a helical span at residues 203–223 (GLFIEMFLTAELVFTIFMLAA). Residues 224–229 (EKHKGT) lie on the Cytoplasmic side of the membrane. The chain crosses the membrane as a helical span at residues 230-250 (FIAPIGIGLSLFIAELTGVYF). At 251–274 (TGGSVNPARSFGPSVVSGQFTGYH) the chain is on the extracellular side. The short motif at 256–258 (NPA) is the NPA 2 element. Residues 275–295 (WIYWVGPILGAILASAFYKFI) traverse the membrane as a helical segment. Over 296 to 454 (KMLEYETANP…ENLRDNTHNN (159 aa)) the chain is Cytoplasmic. The tract at residues 343-454 (GASHVHENGN…ENLRDNTHNN (112 aa)) is disordered.

Belongs to the MIP/aquaporin (TC 1.A.8) family.

The protein resides in the membrane. It catalyses the reaction H2O(in) = H2O(out). Its function is as follows. Water channel required to facilitate the transport of water across membranes. Involved in conidiation. This chain is Aquaporin-7, found in Botryotinia fuckeliana (strain B05.10) (Noble rot fungus).